We begin with the raw amino-acid sequence, 409 residues long: Arginine biosynthesis bifunctional protein ArgJ (409 aa).

The substrate site is built by threonine 157, lysine 183, threonine 194, glutamate 281, asparagine 404, and serine 409. Threonine 194 serves as the catalytic Nucleophile.

It belongs to the ArgJ family. In terms of assembly, heterotetramer of two alpha and two beta chains.

The protein localises to the cytoplasm. The catalysed reaction is N(2)-acetyl-L-ornithine + L-glutamate = N-acetyl-L-glutamate + L-ornithine. It carries out the reaction L-glutamate + acetyl-CoA = N-acetyl-L-glutamate + CoA + H(+). It functions in the pathway amino-acid biosynthesis; L-arginine biosynthesis; L-ornithine and N-acetyl-L-glutamate from L-glutamate and N(2)-acetyl-L-ornithine (cyclic): step 1/1. The protein operates within amino-acid biosynthesis; L-arginine biosynthesis; N(2)-acetyl-L-ornithine from L-glutamate: step 1/4. Functionally, catalyzes two activities which are involved in the cyclic version of arginine biosynthesis: the synthesis of N-acetylglutamate from glutamate and acetyl-CoA as the acetyl donor, and of ornithine by transacetylation between N(2)-acetylornithine and glutamate. This chain is Arginine biosynthesis bifunctional protein ArgJ, found in Zymomonas mobilis subsp. mobilis (strain ATCC 31821 / ZM4 / CP4).